Here is a 375-residue protein sequence, read N- to C-terminus: Actin-related protein T1 (375 aa).

Belongs to the actin family.

Its subcellular location is the cytoplasm. It is found in the cytoskeleton. The protein resides in the nucleus. The protein localises to the cytoplasmic vesicle. It localises to the secretory vesicle. Its subcellular location is the acrosome. Its function is as follows. Negatively regulates the Hedgehog (SHH) signaling. Binds to the promoter of the SHH signaling mediator, GLI1, and inhibits its expression. The chain is Actin-related protein T1 (ACTRT1) from Macaca fascicularis (Crab-eating macaque).